Reading from the N-terminus, the 344-residue chain is Outer membrane protein A (344 aa).

The Periplasmic segment spans residues 1–14 (MKAIFVLNAAPKDN). A beta stranded membrane pass occupies residues 15–24 (TWYAGGKLGW). Topologically, residues 25–49 (SQYHDTGFYGNGFQNNNGPTRNDQL) are extracellular. The chain crosses the membrane as a beta stranded span at residues 50-59 (GAGAFGGYQV). The Periplasmic portion of the chain corresponds to 60–62 (NPY). Residues 63-71 (LGFEMGYDW) form a beta stranded membrane-spanning segment. Residues 72-89 (LGRMAYKGSVDNGAFKAQ) lie on the Extracellular side of the membrane. Residues 90-100 (GVQLTAKLGYP) traverse the membrane as a beta stranded segment. Residues 101–104 (ITDD) lie on the Periplasmic side of the membrane. The chain crosses the membrane as a beta stranded span at residues 105-114 (LDIYTRLGGM). Over 115 to 139 (VWRADSKGNYASTGVSRSEHDTGVS) the chain is Extracellular. A beta stranded transmembrane segment spans residues 140–149 (PVFAGGVEWA). Residues 150–153 (VTRD) are Periplasmic-facing. A beta stranded membrane pass occupies residues 154-162 (IATRLEYQW). The Extracellular segment spans residues 163–179 (VNNIGDAGTVGTRPDNG). Residues 180 to 188 (MLSLGVSYR) form a beta stranded membrane-spanning segment. The Periplasmic segment spans residues 189–344 (FGQEDAAPVV…YKEVVTQPQA (156 aa)). 4 consecutive repeat copies span residues 199 to 200 (AP), 201 to 202 (AP), 203 to 204 (AP), and 205 to 206 (AP). Residues 199–206 (APAPAPAP) form a 4 X 2 AA tandem repeats of A-P region. Residues 208-336 (VATKHFTLKS…RVEIEVKGYK (129 aa)) form the OmpA-like domain. Cysteine 309 and cysteine 321 are disulfide-bonded.

The protein belongs to the outer membrane OOP (TC 1.B.6) superfamily. OmpA family. Monomer and homodimer.

Its subcellular location is the cell outer membrane. With TolR probably plays a role in maintaining the position of the peptidoglycan cell wall in the periplasm. Acts as a porin with low permeability that allows slow penetration of small solutes; an internal gate slows down solute passage. Functionally, required for conjugation with F-type plasmids; probably serves as the mating receptor on recipient cells. In Klebsiella pneumoniae, this protein is Outer membrane protein A.